We begin with the raw amino-acid sequence, 481 residues long: Endonuclease Bax1 (481 aa).

Residues 1–136 are N-terminal domain (NTD); it reads MLPWELARFS…EKKIIKAPTI (136 aa). The interval 158–250 is central domain (CRD); that stretch reads YKLTVYVSSN…LKLANFKELK (93 aa). The nuclease domain (NUS) stretch occupies residues 260 to 364; it reads DSSVEEKFYK…YKRKIDISLV (105 aa). Residues Glu265, Asp297, and Glu310 each contribute to the a divalent metal cation site. The C-terminal domain (CTD) stretch occupies residues 414 to 481; that stretch reads PGYIFLKNYY…AIVIKDKKVN (68 aa).

Belongs to the Bax1 family. As to quaternary structure, homodimer in solution, forms a heterodimer with XPB2. A divalent metal cation is required as a cofactor.

Functionally, a dual DNA endonuclease probably involved in nucleotide excision repair (NER). The N-terminal nuclease domain (NTD) of the XPB2-Bax1 complex cleaves on one side of a DNA bubble (which presumably mimics DNA damage), while the NUS nuclease domain cleaves the other side, respectively called 5' and 3' nuclease activities. Interaction with XPB blocks the NTD nuclease activity. Binds to and stimulates the ATPase activity (and probably also helicase activity) of XPB2. Increases affinity of XPB2 for forked DNA. Does not stimulate the DNA-dependent activity of XPB1. In an XPB2-Bax1-bubble DNA crystal (12 bp of dsDNA, a 6 base bubble and 6 bp of dsDNA) the short 6 bp arm is unwound. The 2 helicase and the ThM domains of XPB2 with the NTD and CRD domains of Bax1 encircle the DNA, forming a tunnel where the 12 bp dsDNA and the ds-ssDNA junction are located. The ThM domain is wedged between the ssDNA tails, with the 5' ssDNA contacting Bax1 and the 3' ssDNA in a channel in XPB2. The nuclease domain (NUS) of Bax1 does not contact DNA in the bubble DNA complex. The polypeptide is Endonuclease Bax1 (Sulfurisphaera tokodaii (strain DSM 16993 / JCM 10545 / NBRC 100140 / 7) (Sulfolobus tokodaii)).